A 772-amino-acid polypeptide reads, in one-letter code: DnaJ homolog subfamily C member 16 (772 aa).

The N-terminal stretch at 1 to 25 is a signal peptide; sequence MELKRLGVSWRFLMVLVLILQSLSA. Residues 26 to 533 lie on the Cytoplasmic side of the membrane; the sequence is LDFDPYRVLG…ESLLHSNWRE (508 aa). Positions 29–93 constitute a J domain; the sequence is DPYRVLGVSR…EKRTNYDHYG (65 aa). The Thioredoxin domain occupies 119–245; it reads FDESFFHFPF…LRQFVESLLP (127 aa). The helical; Anchor for type IV membrane protein transmembrane segment at 534-554 threads the bilayer; it reads MMPLLSLIFSALFILFGTVMV. Over 555 to 772 the chain is Extracellular; sequence QAFSDSNEER…FYIPSWPELD (218 aa). The segment at 560–591 is disordered; it reads SNEERESHPADKEEVPEKAGKTEPSFTKESSS. Over residues 561–580 the composition is skewed to basic and acidic residues; the sequence is NEERESHPADKEEVPEKAGK. An N-linked (GlcNAc...) asparagine glycan is attached at N629.

Its subcellular location is the endoplasmic reticulum membrane. In terms of biological role, plays an important role in regulating the size of autophagosomes during the formation process. In Mus musculus (Mouse), this protein is DnaJ homolog subfamily C member 16 (Dnajc16).